We begin with the raw amino-acid sequence, 334 residues long: MGSIGSMGKPIEGFLVAAIQFPVPIVNSRKDIDHNIESIIRTLHATKAGYPGVELIIFPEYSTQGLNTAKWLSEEFLLDVPGKETELYAKACKEAKVYGVFSIMERNPDSNKNPYNTAIIIDPQGKIILKYRKLFPWNPIEPWYPGDLGMPVCEGPGGSKLAVCICHDGMIPELAREAAYKGCNVYIRISGYSTQVNDQWILTNRSNAWHNLMYTVSVNLAGYDNVFYYFGEGQICNFDGTTLVQGHRNPWEIVTGEIYPKMADNARLSWGLENNIYNLGHRGYVAKPGGEHDAGLTYIKDLAAGKYKLPWEDHMKIKDGSIYGYPTTGGRFGK.

The region spanning F14–P260 is the CN hydrolase domain. Catalysis depends on E60, which acts as the Proton acceptor. The Proton donor role is filled by K133. C166 (nucleophile) is an active-site residue.

It belongs to the carbon-nitrogen hydrolase superfamily. Aliphatic amidase family.

It catalyses the reaction formamide + H2O = formate + NH4(+). Functionally, is an aliphatic amidase with a restricted substrate specificity, as it only hydrolyzes formamide. The sequence is that of Formamidase from Helicobacter pylori (strain G27).